Consider the following 708-residue polypeptide: Fatty acid oxidation complex subunit alpha (708 aa).

The interval 1–191 (MDNNNAFQLS…KLGVVDACVP (191 aa)) is enoyl-CoA hydratase. A 3-hydroxyacyl-CoA dehydrogenase region spans residues 311–708 (APVAAVGVLG…RAGLGEKFYP (398 aa)).

This sequence in the N-terminal section; belongs to the enoyl-CoA hydratase/isomerase family. In the central section; belongs to the 3-hydroxyacyl-CoA dehydrogenase family. Heterotetramer of two alpha chains (FadJ) and two beta chains (FadI).

The protein resides in the cytoplasm. It carries out the reaction a (3S)-3-hydroxyacyl-CoA = a (2E)-enoyl-CoA + H2O. It catalyses the reaction a 4-saturated-(3S)-3-hydroxyacyl-CoA = a (3E)-enoyl-CoA + H2O. The catalysed reaction is a (3S)-3-hydroxyacyl-CoA + NAD(+) = a 3-oxoacyl-CoA + NADH + H(+). The enzyme catalyses (3S)-3-hydroxybutanoyl-CoA = (3R)-3-hydroxybutanoyl-CoA. It functions in the pathway lipid metabolism; fatty acid beta-oxidation. Its function is as follows. Catalyzes the formation of a hydroxyacyl-CoA by addition of water on enoyl-CoA. Also exhibits 3-hydroxyacyl-CoA epimerase and 3-hydroxyacyl-CoA dehydrogenase activities. This Vibrio cholerae serotype O1 (strain ATCC 39315 / El Tor Inaba N16961) protein is Fatty acid oxidation complex subunit alpha.